The chain runs to 316 residues: Peroxidase 67 (316 aa).

The signal sequence occupies residues 1-19; that stretch reads MLKVVLLMMIMMLASQSEA. Gln20 is subject to Pyrrolidone carboxylic acid. 4 disulfide bridges follow: Cys30/Cys110, Cys63/Cys68, Cys116/Cys312, and Cys196/Cys221. Residue His61 is the Proton acceptor of the active site. Residues Asp62, Val65, Gly67, Asp69, and Ser71 each contribute to the Ca(2+) site. Residue Pro159 participates in substrate binding. His189 contacts heme b. Residue Thr190 participates in Ca(2+) binding. N-linked (GlcNAc...) asparagine glycosylation occurs at Asn205. Residues Asp236, Ser239, and Asp244 each coordinate Ca(2+).

This sequence belongs to the peroxidase family. Classical plant (class III) peroxidase subfamily. Requires heme b as cofactor. The cofactor is Ca(2+).

The protein resides in the secreted. The enzyme catalyses 2 a phenolic donor + H2O2 = 2 a phenolic radical donor + 2 H2O. In terms of biological role, removal of H(2)O(2), oxidation of toxic reductants, biosynthesis and degradation of lignin, suberization, auxin catabolism, response to environmental stresses such as wounding, pathogen attack and oxidative stress. These functions might be dependent on each isozyme/isoform in each plant tissue. This chain is Peroxidase 67 (PER67), found in Arabidopsis thaliana (Mouse-ear cress).